The primary structure comprises 275 residues: Vitamin B12-binding protein (275 aa).

The N-terminal stretch at methionine 1–alanine 19 is a signal peptide. A Fe/B12 periplasmic-binding domain is found at arginine 25 to arginine 272. A disulfide bond links cysteine 185 and cysteine 265.

The protein belongs to the BtuF family. In terms of assembly, the complex is composed of two ATP-binding proteins (BtuD), two transmembrane proteins (BtuC) and a solute-binding protein (BtuF).

It localises to the periplasm. Its function is as follows. Part of the ABC transporter complex BtuCDF involved in vitamin B12 import. Binds vitamin B12 and delivers it to the periplasmic surface of BtuC. In Vibrio campbellii (strain ATCC BAA-1116), this protein is Vitamin B12-binding protein.